The chain runs to 37 residues: Large ribosomal subunit protein bL36c (37 aa).

This sequence belongs to the bacterial ribosomal protein bL36 family.

The protein resides in the plastid. It localises to the chloroplast. The polypeptide is Large ribosomal subunit protein bL36c (Tupiella akineta (Green alga)).